A 208-amino-acid chain; its full sequence is Putative dioxygenase RC0543 (208 aa).

It belongs to the intradiol ring-cleavage dioxygenase family.

In Rickettsia conorii (strain ATCC VR-613 / Malish 7), this protein is Putative dioxygenase RC0543.